The following is a 407-amino-acid chain: Arrestin domain-containing protein 2 (407 aa).

Belongs to the arrestin family. In terms of assembly, interacts with WWP1 (via WW domains).

The polypeptide is Arrestin domain-containing protein 2 (ARRDC2) (Homo sapiens (Human)).